Reading from the N-terminus, the 60-residue chain is Pepsin-3 (60 aa).

A propeptide spans 1–35 (INVPLTRHKSMRESLREKGIELPYQDPAIKYRPEF) (activation peptide).

The protein belongs to the peptidase A1 family.

This Thunnus orientalis (North Pacific bluefin tuna) protein is Pepsin-3.